A 556-amino-acid polypeptide reads, in one-letter code: Arginine--tRNA ligase 1 (556 aa).

Positions 132–142 (ANPTGNLHLGH) match the 'HIGH' region motif.

It belongs to the class-I aminoacyl-tRNA synthetase family. In terms of assembly, monomer.

Its subcellular location is the cytoplasm. The catalysed reaction is tRNA(Arg) + L-arginine + ATP = L-arginyl-tRNA(Arg) + AMP + diphosphate. This Halalkalibacterium halodurans (strain ATCC BAA-125 / DSM 18197 / FERM 7344 / JCM 9153 / C-125) (Bacillus halodurans) protein is Arginine--tRNA ligase 1 (argS1).